The following is an 852-amino-acid chain: Leucine--tRNA ligase (852 aa).

The 'HIGH' region motif lies at 42-52 (PYPSGKLHMGH). The interval 586 to 606 (NKYVPADQVDPNDPKDPETGE) is disordered. Residues 614–618 (KMSKS) carry the 'KMSKS' region motif. Lys617 is an ATP binding site.

The protein belongs to the class-I aminoacyl-tRNA synthetase family.

Its subcellular location is the cytoplasm. The catalysed reaction is tRNA(Leu) + L-leucine + ATP = L-leucyl-tRNA(Leu) + AMP + diphosphate. This is Leucine--tRNA ligase from Picosynechococcus sp. (strain ATCC 27264 / PCC 7002 / PR-6) (Agmenellum quadruplicatum).